Reading from the N-terminus, the 155-residue chain is Ribosome maturation factor RimP (155 aa).

Belongs to the RimP family.

It localises to the cytoplasm. Its function is as follows. Required for maturation of 30S ribosomal subunits. The sequence is that of Ribosome maturation factor RimP from Dichelobacter nodosus (strain VCS1703A).